Consider the following 482-residue polypeptide: Proline--tRNA ligase (482 aa).

Residues Thr117, Glu119, and Arg148 each contribute to the L-proline site. ATP is bound by residues Arg148, Glu150, Gln232, and Thr235. Residue His237 coordinates L-proline. Ser269 is an ATP binding site. Residues 346–376 form an interaction with tRNA region; that stretch reads EMRGVPLRVEIGPRDLEKGAAVISRRDTGEK. Zn(2+)-binding residues include Cys436, Cys441, Cys464, and Cys467.

It belongs to the class-II aminoacyl-tRNA synthetase family. ProS type 3 subfamily. Homodimer. The dimer is functionally asymmetric: only one of the two active sites at a time is able to form prolyl-adenylate, and only one tRNA molecule binds per dimer. Interacts with LeuRS, which enhances tRNA(Pro) aminoacylation.

The protein resides in the cytoplasm. The enzyme catalyses tRNA(Pro) + L-proline + ATP = L-prolyl-tRNA(Pro) + AMP + diphosphate. Its function is as follows. Catalyzes the attachment of proline to tRNA(Pro) in a two-step reaction: proline is first activated by ATP to form Pro-AMP and then transferred to the acceptor end of tRNA(Pro). Can inadvertently accommodate and process cysteine. This chain is Proline--tRNA ligase (proS), found in Methanothermobacter thermautotrophicus (strain ATCC 29096 / DSM 1053 / JCM 10044 / NBRC 100330 / Delta H) (Methanobacterium thermoautotrophicum).